The primary structure comprises 207 residues: Large ribosomal subunit protein uL4 (207 aa).

The segment at 44–78 (MRQGTHKTKNRAEVSGGGRKPWRQKGTGRARQGSI) is disordered.

It belongs to the universal ribosomal protein uL4 family. As to quaternary structure, part of the 50S ribosomal subunit.

In terms of biological role, one of the primary rRNA binding proteins, this protein initially binds near the 5'-end of the 23S rRNA. It is important during the early stages of 50S assembly. It makes multiple contacts with different domains of the 23S rRNA in the assembled 50S subunit and ribosome. Its function is as follows. Forms part of the polypeptide exit tunnel. This chain is Large ribosomal subunit protein uL4, found in Geobacillus kaustophilus (strain HTA426).